The primary structure comprises 658 residues: Aspartate--tRNA ligase, mitochondrial (658 aa).

Glu198 contacts L-aspartate. Residues 226-229 (QQYK) are aspartate. Arg248 is an L-aspartate binding site. ATP-binding positions include 248-250 (RDE) and Glu553. L-aspartate is bound at residue Arg560. Position 604–607 (604–607 (GFDR)) interacts with ATP.

It belongs to the class-II aminoacyl-tRNA synthetase family. Type 1 subfamily.

It is found in the mitochondrion matrix. The enzyme catalyses tRNA(Asp) + L-aspartate + ATP = L-aspartyl-tRNA(Asp) + AMP + diphosphate. Its function is as follows. Catalyzes the attachment of aspartate to tRNA(Asp) in the mitochondrion. In Saccharomyces cerevisiae (strain ATCC 204508 / S288c) (Baker's yeast), this protein is Aspartate--tRNA ligase, mitochondrial (MSD1).